Here is a 274-residue protein sequence, read N- to C-terminus: NH(3)-dependent NAD(+) synthetase (274 aa).

46–53 (GISGGQDS) contacts ATP. Position 52 (Asp52) interacts with Mg(2+). Arg140 is a binding site for deamido-NAD(+). Residue Thr160 coordinates ATP. Position 165 (Glu165) interacts with Mg(2+). Deamido-NAD(+) is bound by residues Lys173 and Asp180. ATP contacts are provided by Lys189 and Thr211. A deamido-NAD(+)-binding site is contributed by 260–261 (HK).

The protein belongs to the NAD synthetase family. Homodimer.

The enzyme catalyses deamido-NAD(+) + NH4(+) + ATP = AMP + diphosphate + NAD(+) + H(+). The protein operates within cofactor biosynthesis; NAD(+) biosynthesis; NAD(+) from deamido-NAD(+) (ammonia route): step 1/1. Its function is as follows. Catalyzes the ATP-dependent amidation of deamido-NAD to form NAD. Uses ammonia as a nitrogen source. This Sodalis glossinidius (strain morsitans) protein is NH(3)-dependent NAD(+) synthetase.